A 321-amino-acid polypeptide reads, in one-letter code: Aldose reductase C (321 aa).

22 to 31 (GNQIPSIGLG) is a binding site for NADP(+). The active-site Proton donor is Tyr-62. His-124 serves as a coordination point for substrate. 227–281 (SPLGQGKCDFFSNKILKSIAGKYKKSVANVIFKWLNQRGIAAIPKSGNHSRIIEN) is an NADP(+) binding site.

Belongs to the aldo/keto reductase family.

It catalyses the reaction an alditol + NAD(+) = an aldose + NADH + H(+). It carries out the reaction an alditol + NADP(+) = an aldose + NADPH + H(+). Functionally, catalyzes the NADPH-dependent reduction of a wide variety of carbonyl-containing compounds to their corresponding alcohols with a broad range of catalytic efficiencies. This Dictyostelium discoideum (Social amoeba) protein is Aldose reductase C (alrC).